The sequence spans 403 residues: Acetylornithine/succinyldiaminopimelate aminotransferase (403 aa).

Pyridoxal 5'-phosphate contacts are provided by residues 107-108 and Phe140; that span reads GA. Position 143 (Arg143) interacts with N(2)-acetyl-L-ornithine. Residue 225-228 participates in pyridoxal 5'-phosphate binding; the sequence is DEVQ. Lys254 bears the N6-(pyridoxal phosphate)lysine mark. Thr282 contributes to the N(2)-acetyl-L-ornithine binding site. Thr283 is a binding site for pyridoxal 5'-phosphate.

It belongs to the class-III pyridoxal-phosphate-dependent aminotransferase family. ArgD subfamily. As to quaternary structure, homodimer. Pyridoxal 5'-phosphate serves as cofactor.

The protein resides in the cytoplasm. The catalysed reaction is N(2)-acetyl-L-ornithine + 2-oxoglutarate = N-acetyl-L-glutamate 5-semialdehyde + L-glutamate. It catalyses the reaction N-succinyl-(2S,6S)-2,6-diaminopimelate + 2-oxoglutarate = (S)-2-succinylamino-6-oxoheptanedioate + L-glutamate. Its pathway is amino-acid biosynthesis; L-arginine biosynthesis; N(2)-acetyl-L-ornithine from L-glutamate: step 4/4. It functions in the pathway amino-acid biosynthesis; L-lysine biosynthesis via DAP pathway; LL-2,6-diaminopimelate from (S)-tetrahydrodipicolinate (succinylase route): step 2/3. Its function is as follows. Involved in both the arginine and lysine biosynthetic pathways. The sequence is that of Acetylornithine/succinyldiaminopimelate aminotransferase from Photorhabdus laumondii subsp. laumondii (strain DSM 15139 / CIP 105565 / TT01) (Photorhabdus luminescens subsp. laumondii).